Reading from the N-terminus, the 57-residue chain is MLRWVLIFLAVAVVAAILGFGGIAGTAAGIAKIIFYIFIILFAISLVVRLLQGNKRL.

2 helical membrane-spanning segments follow: residues 4-24 and 28-48; these read WVLIFLAVAVVAAILGFGGIA and AGIAKIIFYIFIILFAISLVV.

The protein belongs to the UPF0391 family.

The protein resides in the cell membrane. This chain is UPF0391 membrane protein IL0696, found in Idiomarina loihiensis (strain ATCC BAA-735 / DSM 15497 / L2-TR).